A 308-amino-acid polypeptide reads, in one-letter code: MANTVILVDQPTLEKMKQTYLPFSNPKLPPGAVFAAKKTGVSITGYKSRKVMFQGVNGEVEAKKWVATLPESKTKAPSVSKGILPANFASKNVIGSDEVGTGDFFGPITVCAAYVDAEMMPLLKELGVKDSKAMKDPEICRIAEKIMPLVPHSVLLCPNPKYNELQKRGMNQGQMKALLHNRAIENVLKKLAPVKPEAILIDQFAEKNTYYRYLAKEPSIIREDVFFATKAEGLHLSVAAASIIARYKFVQAFDAMSKEVGIPLPKGAGPHVDAVAAEIIERFGLETLAKYTKQHFANTEKALKMVKK.

Residues 91 to 308 (KNVIGSDEVG…TEKALKMVKK (218 aa)) enclose the RNase H type-2 domain. A divalent metal cation-binding residues include Asp-97, Glu-98, and Asp-202.

Belongs to the RNase HII family. RnhC subfamily. The cofactor is Mn(2+). Mg(2+) serves as cofactor.

It localises to the cytoplasm. The catalysed reaction is Endonucleolytic cleavage to 5'-phosphomonoester.. Endonuclease that specifically degrades the RNA of RNA-DNA hybrids. In Listeria monocytogenes serotype 4b (strain CLIP80459), this protein is Ribonuclease HIII.